The sequence spans 88 residues: Small ribosomal subunit protein uS15c (88 aa).

It belongs to the universal ribosomal protein uS15 family. In terms of assembly, part of the 30S ribosomal subunit.

The protein resides in the plastid. It is found in the chloroplast. The polypeptide is Small ribosomal subunit protein uS15c (rps15) (Calycanthus floridus var. glaucus (Eastern sweetshrub)).